A 313-amino-acid chain; its full sequence is MLGSGRRRLLSTLLQVQKRPCQPCRNMRLVQFQAPHLEEPHVGLESGIGGGVVDLNTFDPALPKTMVQFLERGETALSVARRALAAQLPLIPRSQVTFLAPVTRPDKVICVGLNYADHCQEQNVRVPKNPIIFSKFSSSIVGPYDSIILPPESKEVDWEVEMAVVIGKKGKHIKATDVMAYVAGFTVAHDVSARDWQMRNGKQWLLGKTFDTFCPLGPALVTKDTIADPHNLKISCRVNGEIVQSSNTNQMVFKTEDLIAWVSQFVTLYPGDILLTGTPPGVGMFRKPPVFLKKGDEVQCEIEELGVIINKVV.

Residues M1–L84 constitute a mitochondrion transit peptide. Mg(2+) contacts are provided by E159, E161, and D190. K202 carries the N6-acetyllysine; alternate modification. At K202 the chain carries N6-succinyllysine; alternate. An N6-acetyllysine modification is found at K233.

The protein belongs to the FAH family. Requires Mg(2+) as cofactor. Mn(2+) serves as cofactor.

The protein resides in the mitochondrion. The enzyme catalyses oxaloacetate = enol-oxaloacetate. In terms of biological role, tautomerase that converts enol-oxaloacetate, a strong inhibitor of succinate dehydrogenase, to the physiological keto form of oxaloacetate. It is thereby required to maximize aerobic respiration efficiency by preventing succinate dehydrogenase inhibition. The chain is Oxaloacetate tautomerase Fahd2a, mitochondrial from Rattus norvegicus (Rat).